The chain runs to 271 residues: Imidazole glycerol phosphate synthase subunit HisF (271 aa).

Residues Asp12 and Asp136 contribute to the active site.

It belongs to the HisA/HisF family. In terms of assembly, heterodimer of HisH and HisF.

It localises to the cytoplasm. The catalysed reaction is 5-[(5-phospho-1-deoxy-D-ribulos-1-ylimino)methylamino]-1-(5-phospho-beta-D-ribosyl)imidazole-4-carboxamide + L-glutamine = D-erythro-1-(imidazol-4-yl)glycerol 3-phosphate + 5-amino-1-(5-phospho-beta-D-ribosyl)imidazole-4-carboxamide + L-glutamate + H(+). The protein operates within amino-acid biosynthesis; L-histidine biosynthesis; L-histidine from 5-phospho-alpha-D-ribose 1-diphosphate: step 5/9. In terms of biological role, IGPS catalyzes the conversion of PRFAR and glutamine to IGP, AICAR and glutamate. The HisF subunit catalyzes the cyclization activity that produces IGP and AICAR from PRFAR using the ammonia provided by the HisH subunit. The chain is Imidazole glycerol phosphate synthase subunit HisF from Haloarcula marismortui (strain ATCC 43049 / DSM 3752 / JCM 8966 / VKM B-1809) (Halobacterium marismortui).